The following is a 398-amino-acid chain: Dual-specificity RNA methyltransferase RlmN (398 aa).

Glu-100 (proton acceptor) is an active-site residue. A Radical SAM core domain is found at 106-345 (DGDRGTLCVS…TTVRTTRGDD (240 aa)). Cys-113 and Cys-350 are joined by a disulfide. Residues Cys-120, Cys-124, and Cys-127 each coordinate [4Fe-4S] cluster. S-adenosyl-L-methionine is bound by residues 174–175 (GE), Ser-206, 228–230 (SLH), and Asn-307. Cys-350 (S-methylcysteine intermediate) is an active-site residue.

The protein belongs to the radical SAM superfamily. RlmN family. Requires [4Fe-4S] cluster as cofactor.

The protein localises to the cytoplasm. The enzyme catalyses adenosine(2503) in 23S rRNA + 2 reduced [2Fe-2S]-[ferredoxin] + 2 S-adenosyl-L-methionine = 2-methyladenosine(2503) in 23S rRNA + 5'-deoxyadenosine + L-methionine + 2 oxidized [2Fe-2S]-[ferredoxin] + S-adenosyl-L-homocysteine. The catalysed reaction is adenosine(37) in tRNA + 2 reduced [2Fe-2S]-[ferredoxin] + 2 S-adenosyl-L-methionine = 2-methyladenosine(37) in tRNA + 5'-deoxyadenosine + L-methionine + 2 oxidized [2Fe-2S]-[ferredoxin] + S-adenosyl-L-homocysteine. In terms of biological role, specifically methylates position 2 of adenine 2503 in 23S rRNA and position 2 of adenine 37 in tRNAs. m2A2503 modification seems to play a crucial role in the proofreading step occurring at the peptidyl transferase center and thus would serve to optimize ribosomal fidelity. This Saccharophagus degradans (strain 2-40 / ATCC 43961 / DSM 17024) protein is Dual-specificity RNA methyltransferase RlmN.